A 117-amino-acid chain; its full sequence is Large ribosomal subunit protein bL19 (117 aa).

The protein belongs to the bacterial ribosomal protein bL19 family.

Its function is as follows. This protein is located at the 30S-50S ribosomal subunit interface and may play a role in the structure and function of the aminoacyl-tRNA binding site. The protein is Large ribosomal subunit protein bL19 of Micrococcus luteus (strain ATCC 4698 / DSM 20030 / JCM 1464 / CCM 169 / CCUG 5858 / IAM 1056 / NBRC 3333 / NCIMB 9278 / NCTC 2665 / VKM Ac-2230) (Micrococcus lysodeikticus).